The following is a 351-amino-acid chain: Histidinol-phosphate aminotransferase (351 aa).

Residue K209 is modified to N6-(pyridoxal phosphate)lysine.

This sequence belongs to the class-II pyridoxal-phosphate-dependent aminotransferase family. Histidinol-phosphate aminotransferase subfamily. As to quaternary structure, homodimer. Pyridoxal 5'-phosphate is required as a cofactor.

The enzyme catalyses L-histidinol phosphate + 2-oxoglutarate = 3-(imidazol-4-yl)-2-oxopropyl phosphate + L-glutamate. Its pathway is amino-acid biosynthesis; L-histidine biosynthesis; L-histidine from 5-phospho-alpha-D-ribose 1-diphosphate: step 7/9. In Chromohalobacter salexigens (strain ATCC BAA-138 / DSM 3043 / CIP 106854 / NCIMB 13768 / 1H11), this protein is Histidinol-phosphate aminotransferase.